Consider the following 246-residue polypeptide: tRNA pseudouridine synthase A (246 aa).

Residue Asp-52 is the Nucleophile of the active site. Tyr-111 provides a ligand contact to substrate.

Belongs to the tRNA pseudouridine synthase TruA family. In terms of assembly, homodimer.

The catalysed reaction is uridine(38/39/40) in tRNA = pseudouridine(38/39/40) in tRNA. In terms of biological role, formation of pseudouridine at positions 38, 39 and 40 in the anticodon stem and loop of transfer RNAs. The chain is tRNA pseudouridine synthase A from Rhodopseudomonas palustris (strain BisA53).